A 401-amino-acid chain; its full sequence is Probable 2,3-bisphosphoglycerate-independent phosphoglycerate mutase (401 aa).

Belongs to the BPG-independent phosphoglycerate mutase family. A-PGAM subfamily.

It carries out the reaction (2R)-2-phosphoglycerate = (2R)-3-phosphoglycerate. The protein operates within carbohydrate degradation; glycolysis; pyruvate from D-glyceraldehyde 3-phosphate: step 3/5. In terms of biological role, catalyzes the interconversion of 2-phosphoglycerate and 3-phosphoglycerate. In Thermotoga neapolitana (strain ATCC 49049 / DSM 4359 / NBRC 107923 / NS-E), this protein is Probable 2,3-bisphosphoglycerate-independent phosphoglycerate mutase.